We begin with the raw amino-acid sequence, 297 residues long: MATNLRGVMAALLTPFDQQQALDKASLRRLVQFNIQQGIDGLYVGGSTGEAFVQSLSEREQVLEIVAEEAKGQIKLIAHVGCVSTAESQQLAASAKRYGFDAVSAVTPFYYPFSFEEHCDHYRAIIDSADGLPMVVYNIPALSGVKLTLDQINTLVTLPGVGALKQTSGDLYQMEQIRREHPDLVLYNGYDEIFASGLLAGADGGIGSTYNIMGWRYQGIVKALKEGDIQTAQKLQTECNKVIDLLIKTGVFRGLKTVLHYMDVVSVPLCRKPFGPVDEKYLPELKALAQQLMQERG.

The aceneuramate site is built by Ser47 and Thr48. The active-site Proton donor is the Tyr137. Lys165 (schiff-base intermediate with substrate) is an active-site residue. Aceneuramate-binding residues include Thr167, Gly189, Asp191, Glu192, and Ser208.

It belongs to the DapA family. NanA subfamily. As to quaternary structure, homotetramer.

It localises to the cytoplasm. It catalyses the reaction aceneuramate = aldehydo-N-acetyl-D-mannosamine + pyruvate. It participates in amino-sugar metabolism; N-acetylneuraminate degradation; D-fructose 6-phosphate from N-acetylneuraminate: step 1/5. Catalyzes the reversible aldol cleavage of N-acetylneuraminic acid (sialic acid; Neu5Ac) to form pyruvate and N-acetylmannosamine (ManNAc) via a Schiff base intermediate. This chain is N-acetylneuraminate lyase, found in Escherichia coli (strain SE11).